We begin with the raw amino-acid sequence, 914 residues long: Probable dipeptidyl-aminopeptidase B (914 aa).

Basic and acidic residues predominate over residues 1-10 (MATFSDHETS). The tract at residues 1–63 (MATFSDHETS…TGMDNGDRYR (63 aa)) is disordered. Topologically, residues 1-91 (MATFSDHETS…KAATGGRARR (91 aa)) are cytoplasmic. Over residues 20–35 (STSSASQTSSDSGLSS) the composition is skewed to low complexity. Over residues 45–56 (QPFSAPNGTTGM) the composition is skewed to polar residues. A helical; Signal-anchor for type II membrane protein transmembrane segment spans residues 92–112 (IFWLLVLLCFGGWLLAFVLFL). The Vacuolar portion of the chain corresponds to 113–914 (TGGRANYQSA…RFKRSLPVLV (802 aa)). N-linked (GlcNAc...) asparagine glycans are attached at residues asparagine 348, asparagine 565, and asparagine 639. Catalysis depends on serine 753, which acts as the Charge relay system. Asparagine 807 is a glycosylation site (N-linked (GlcNAc...) asparagine). Catalysis depends on charge relay system residues aspartate 830 and histidine 863.

Belongs to the peptidase S9B family.

The protein localises to the vacuole membrane. The enzyme catalyses Release of an N-terminal dipeptide, Xaa-Yaa-|-Zaa-, from a polypeptide, preferentially when Yaa is Pro, provided Zaa is neither Pro nor hydroxyproline.. Type IV dipeptidyl-peptidase which removes N-terminal dipeptides sequentially from polypeptides having unsubstituted N-termini provided that the penultimate residue is proline. The sequence is that of Probable dipeptidyl-aminopeptidase B (dapB) from Aspergillus clavatus (strain ATCC 1007 / CBS 513.65 / DSM 816 / NCTC 3887 / NRRL 1 / QM 1276 / 107).